The following is a 210-amino-acid chain: FMN-dependent NADH:quinone oxidoreductase 9 (210 aa).

Residues serine 10 and 16–18 (SAS) contribute to the FMN site.

The protein belongs to the azoreductase type 1 family. Homodimer. Requires FMN as cofactor.

It carries out the reaction 2 a quinone + NADH + H(+) = 2 a 1,4-benzosemiquinone + NAD(+). The catalysed reaction is N,N-dimethyl-1,4-phenylenediamine + anthranilate + 2 NAD(+) = 2-(4-dimethylaminophenyl)diazenylbenzoate + 2 NADH + 2 H(+). Quinone reductase that provides resistance to thiol-specific stress caused by electrophilic quinones. In terms of biological role, also exhibits azoreductase activity. Catalyzes the reductive cleavage of the azo bond in aromatic azo compounds to the corresponding amines. The polypeptide is FMN-dependent NADH:quinone oxidoreductase 9 (Burkholderia lata (strain ATCC 17760 / DSM 23089 / LMG 22485 / NCIMB 9086 / R18194 / 383)).